Reading from the N-terminus, the 427-residue chain is Zinc-finger homeodomain protein 7 (427 aa).

Disordered regions lie at residues 1-60 (MEYK…SLMD) and 91-118 (LHAAHHHGQGRRVEAPGGESQHHLQRHH). Residues 10-28 (EEEEEEEEEEDDEEEDEEE) are compositionally biased toward acidic residues. The segment covering 50 to 60 (SSASSPSSLMD) has biased composition (low complexity). A ZF-HD dimerization-type; degenerate zinc finger spans residues 163–211 (YRECLKNHAARMGAHVLDGCGEFMSSPGDGAAALACAACGCHRSFHRRE). 2 disordered regions span residues 264–320 (KRPP…SKKR) and 375–427 (HLAK…QHDA). Composition is skewed to low complexity over residues 271 to 283 (VSPASAPAALAES) and 301 to 312 (HAAAVVAASASA). Positions 318–381 (KKRFRTKFTA…NNKHLAKTPP (64 aa)) form a DNA-binding region, homeobox. Positions 380 to 401 (PPSPTSQPPPPPLHHDPSPPPP) are enriched in pro residues. Over residues 402 to 416 (PHHHHHHHHHHHPPQ) the composition is skewed to basic residues. Residues 417 to 427 (HHQQQQQQHDA) show a composition bias toward low complexity.

Homo- and heterodimer with other ZFHD proteins.

Its subcellular location is the nucleus. In terms of biological role, putative transcription factor. The chain is Zinc-finger homeodomain protein 7 (ZHD7) from Oryza sativa subsp. japonica (Rice).